Here is a 187-residue protein sequence, read N- to C-terminus: UPF0398 protein SH1465 (187 aa).

It belongs to the UPF0398 family.

This chain is UPF0398 protein SH1465, found in Staphylococcus haemolyticus (strain JCSC1435).